The chain runs to 235 residues: MTHQKRLSVPKSWKVGRKGNKWISTTRPGPHSQARSLPLGLIIRDVLKLVDNNREGKRILSEGKVLVDGISRKDLRFPVGLFDVITLPLVNEAYRMLQDEKGRLVLYKLNETNVNKLCRINNKTTVKGGKIQLNLNDGTNILGSNDYGTKDSLILSIPDKHVVKHLKFEVGNLAMVIGGQHSGETGKIMEIREVKSSRHNTVMISGETDFETIEDYVIVIGEDKPEIRLGGEISE.

One can recognise an S4 RNA-binding domain in the interval 37 to 110 (LPLGLIIRDV…KGRLVLYKLN (74 aa)).

This sequence belongs to the eukaryotic ribosomal protein eS4 family.

The polypeptide is Small ribosomal subunit protein eS4 (Methanosarcina mazei (strain ATCC BAA-159 / DSM 3647 / Goe1 / Go1 / JCM 11833 / OCM 88) (Methanosarcina frisia)).